The sequence spans 323 residues: MELTGVTSQSIFDDNAADIKLSWVAGLEGADRAFDVEFAREATSAADLVGHLNLIHPNRIQVLGKPEILYYQRLDDEPRKRQMGELILLEPPFLVVADGMEPPPDLELRCTRSSTPLFTTPVSSAAVIDHLRLYLSRISAPRVTMHGVFLDILGMGVLIMGESGLGKSELGLELISRGHGLVADDAVDFVRLGPDFIEGRCPPLLQNLLEVRGLGLLDIKTIFGETAVRRKMKLKLVVQLVRRNDGEFERLPLDSQYLDVLGLPIHMVKIQVAAGRNLAVLVEAAVRNTILRLRGIDTLRDFMDRQRAAMQADVVSRGQGRLL.

Residues H146 and K167 contribute to the active site. Residue 161–168 coordinates ATP; it reads GESGLGKS. S168 serves as a coordination point for Mg(2+). D185 acts as the Proton acceptor; for phosphorylation activity. Proton donor; for dephosphorylation activity in catalysis. Positions 209-218 are important for the catalytic mechanism of both phosphorylation and dephosphorylation; sequence LEVRGLGLLD. E210 lines the Mg(2+) pocket. The active site involves R250. The important for the catalytic mechanism of dephosphorylation stretch occupies residues 271 to 276; that stretch reads QVAAGR.

The protein belongs to the HPrK/P family. As to quaternary structure, homohexamer. Mg(2+) serves as cofactor.

The enzyme catalyses [HPr protein]-L-serine + ATP = [HPr protein]-O-phospho-L-serine + ADP + H(+). It carries out the reaction [HPr protein]-O-phospho-L-serine + phosphate + H(+) = [HPr protein]-L-serine + diphosphate. Functionally, catalyzes the ATP- as well as the pyrophosphate-dependent phosphorylation of a specific serine residue in HPr, a phosphocarrier protein of the phosphoenolpyruvate-dependent sugar phosphotransferase system (PTS). HprK/P also catalyzes the pyrophosphate-producing, inorganic phosphate-dependent dephosphorylation (phosphorolysis) of seryl-phosphorylated HPr (P-Ser-HPr). This is HPr kinase/phosphorylase from Cupriavidus metallidurans (strain ATCC 43123 / DSM 2839 / NBRC 102507 / CH34) (Ralstonia metallidurans).